Reading from the N-terminus, the 307-residue chain is Protein ORANGE, chloroplastic (307 aa).

A chloroplast-targeting transit peptide spans 1–55 (MSSLGRILSVSYPPDPYTWRFSQYKLSSSLGRNRRLRWRFTALDPESSSLDSESS). K58 is covalently cross-linked (Glycyl lysine isopeptide (Lys-Gly) (interchain with G-Cter in ubiquitin)). Helical transmembrane passes span 146–166 (VYYA…GLLA) and 199–219 (IVAS…VVEV). The CR-type-like stretch occupies residues 208-299 (VGVISALMVV…CTGMAMASEH (92 aa)). Residues 230-237 (CKYCLGTG) form a CXXCXGXG motif repeat. A CXXCXXXG motif repeat occupies 241–248 (CARCSSTG). The stretch at 274–281 (CSNCSGAG) is one CXXCXGXG motif repeat. A CXXCXXXG motif repeat occupies 285 to 292 (CPTCLCTG).

This sequence belongs to the orange-like family. In terms of assembly, interacts with the phytoene synthase PSY1 in chloroplast. Binds to the eukaryotic release factor eRF1-2. Interacts with the transcription factor TCP14 in the nucleus to repress chloroplast biogenesis in etiolated seedlings. Associates to the E2 ubiquitin-conjugating enzyme UBC19. Post-translationally, ubiquitination at K-58 by UBC19 is essential for nuclear localization.

The protein localises to the plastid. The protein resides in the chloroplast membrane. Its subcellular location is the nucleus. It localises to the cytoplasm. Its function is as follows. Involved in chromoplast differentiation. Associated with a cellular process that triggers the differentiation of pro-plastids or other non-colored plastids into chromoplasts for carotenoid accumulation. Is associated with carotenoid accumulation in chromoplasts. Functions as a major regulator of the phytoene synthase PSY1 protein level and activity. Modulates carotenoid biosynthesis by means of post-transcriptional regulation of PSY1. Modulates carotenoid biosynthesis in part by up-regulating a series of endogenous carotenogenic genes. Regulates cell elongation in the petiole in an eRF1-2-dependent manner. Binds to and represses TCP14 transactivation activity, thus preventing early light-induced proteins (ELIPs, e.g. ELIP1 and ELIP2) expression and delaying chloroplast biogenesis (e.g. lower chlorophyll biosynthesis and slower development of thylakoid membranes) in germinating cotyledons and etiolated seedlings; reduced levels upon illumination combined to TCP14 accumulation derepress chloroplast biogenesis during deetiolation. This Arabidopsis thaliana (Mouse-ear cress) protein is Protein ORANGE, chloroplastic.